The sequence spans 107 residues: MNDSEFHQLADQLMLYIEETLDGFTGDSDIDYETNGGVMTLTFENGSKIVINRQEPLHQVWLATKAGGYHFNYRDGHWYCSRSGEEFFAKLSEAATTQAGEEVSFSE.

Belongs to the frataxin family.

Involved in iron-sulfur (Fe-S) cluster assembly. May act as a regulator of Fe-S biogenesis. This Yersinia pseudotuberculosis serotype O:1b (strain IP 31758) protein is Iron-sulfur cluster assembly protein CyaY.